A 280-amino-acid polypeptide reads, in one-letter code: Protein HEAT-INDUCED TAS1 TARGET 4 (280 aa).

The protein belongs to the heat induced plant HTT protein family. As to expression, expressed in seedlings, leaves, stems, inflorescences and siliques.

The protein resides in the cytoplasm. Its subcellular location is the nucleus. Mediates both basal and acquired thermotolerance. This Arabidopsis thaliana (Mouse-ear cress) protein is Protein HEAT-INDUCED TAS1 TARGET 4.